Reading from the N-terminus, the 223-residue chain is Thiamine-phosphate synthase (223 aa).

Residues 37–41 (QFREK) and Asp72 each bind 4-amino-2-methyl-5-(diphosphooxymethyl)pyrimidine. 2 residues coordinate Mg(2+): Asp73 and Asp92. Ser110 provides a ligand contact to 4-amino-2-methyl-5-(diphosphooxymethyl)pyrimidine. 136–138 (TQS) provides a ligand contact to 2-[(2R,5Z)-2-carboxy-4-methylthiazol-5(2H)-ylidene]ethyl phosphate. Lys139 lines the 4-amino-2-methyl-5-(diphosphooxymethyl)pyrimidine pocket. 2-[(2R,5Z)-2-carboxy-4-methylthiazol-5(2H)-ylidene]ethyl phosphate is bound by residues Gly168 and 188–189 (IS).

It belongs to the thiamine-phosphate synthase family. Mg(2+) is required as a cofactor.

The enzyme catalyses 2-[(2R,5Z)-2-carboxy-4-methylthiazol-5(2H)-ylidene]ethyl phosphate + 4-amino-2-methyl-5-(diphosphooxymethyl)pyrimidine + 2 H(+) = thiamine phosphate + CO2 + diphosphate. It catalyses the reaction 2-(2-carboxy-4-methylthiazol-5-yl)ethyl phosphate + 4-amino-2-methyl-5-(diphosphooxymethyl)pyrimidine + 2 H(+) = thiamine phosphate + CO2 + diphosphate. It carries out the reaction 4-methyl-5-(2-phosphooxyethyl)-thiazole + 4-amino-2-methyl-5-(diphosphooxymethyl)pyrimidine + H(+) = thiamine phosphate + diphosphate. It functions in the pathway cofactor biosynthesis; thiamine diphosphate biosynthesis; thiamine phosphate from 4-amino-2-methyl-5-diphosphomethylpyrimidine and 4-methyl-5-(2-phosphoethyl)-thiazole: step 1/1. In terms of biological role, condenses 4-methyl-5-(beta-hydroxyethyl)thiazole monophosphate (THZ-P) and 2-methyl-4-amino-5-hydroxymethyl pyrimidine pyrophosphate (HMP-PP) to form thiamine monophosphate (TMP). The sequence is that of Thiamine-phosphate synthase from Streptococcus agalactiae serotype Ia (strain ATCC 27591 / A909 / CDC SS700).